Consider the following 646-residue polypeptide: Secretogranin-1 (646 aa).

The N-terminal stretch at 1 to 20 is a signal peptide; it reads MQPAALLGLLGATVVAAVSS. C36 and C57 are oxidised to a cystine. Residues 67–90 show a composition bias toward basic and acidic residues; that stretch reads ELKNEEKSENENTRFEVRLLRDPA. The tract at residues 67–483 is disordered; sequence ELKNEEKSEN…GKQYAPHHIT (417 aa). S74 carries the post-translational modification Phosphoserine. Residues T79 and T92 each carry the phosphothreonine modification. Phosphoserine is present on residues S93, S99, S100, and S104. Residue S93 is glycosylated (O-linked (Xyl...) (chondroitin sulfate) serine). O-linked (GalNAc...) threonine glycosylation is present at T113. Basic and acidic residues-rich tracts occupy residues 119–128 and 137–173; these read SGGHSRERAG and KEAKTRYSKSEGQNREEEMVKYQKRERGEVGSEERLS. Residues S123, S146, and S168 each carry the phosphoserine modification. Residues 182-191 show a composition bias toward polar residues; the sequence is AFLNQRNQTP. T190 carries O-linked (GalNAc...) threonine glycosylation. Position 205 is a phosphoserine (S205). Residues 208 to 228 show a composition bias toward basic and acidic residues; it reads GLEKSHSRERSSQESGEETKS. S222 is a glycosylation site (O-linked (Xyl...) (chondroitin sulfate) serine). Over residues 260–270 the composition is skewed to basic residues; sequence RHSRPRHHHGR. 3 positions are modified to phosphoserine: S276, S277, and S295. Y315 carries the sulfotyrosine modification. Positions 340 to 361 are enriched in basic and acidic residues; the sequence is GRGEHQALRRPSEESLEQENKR. Phosphoserine occurs at positions 351 and 354. Y374 carries the post-translational modification Phosphotyrosine. Phosphoserine is present on residues S375 and S378. The span at 406–425 shows a compositional bias: basic and acidic residues; sequence TDEKRFLGETHHRVQESQRD. Residue Y441 is modified to Sulfotyrosine. 2 stretches are compositionally biased toward basic and acidic residues: residues 442–451 and 459–472; these read GEEKGEEAAR and DPRDADENREEARL. Q476 carries the post-translational modification Pyrrolidone carboxylic acid; in secretogranin-1(476-566). Phosphoserine is present on residues S502, S503, and S514. Sulfotyrosine is present on Y535. Pyrrolidone carboxylic acid; in peptide BAM-1745 is present on Q567. Phosphoserine is present on S584. Residues 588-620 are disordered; it reads PDFYDSEEQMSPQHTAENEEEKAGQGVLTEEEE. Sulfotyrosine is present on Y591. S593 and S598 each carry phosphoserine. A Pyrrolidone carboxylic acid; in Secretolytin; partial modification is found at Q634.

It belongs to the chromogranin/secretogranin protein family. Interacts with ITPR1 in the secretory granules. Post-translationally, O-glycosylated by the trisaccharide, GalNAc-Gal-NeuAc, on 2 sites in the N-terminal. May be glycated. Extensively phosphorylated. In terms of processing, differentially processed on numerous sites throughout the sequence depending on tissue type.

It localises to the cytoplasmic vesicle. The protein resides in the secretory vesicle membrane. The protein localises to the secreted. Functionally, secretogranin-1 is a neuroendocrine secretory granule protein, which may be the precursor for other biologically active peptides. The 16 pairs of basic AA distributed throughout its sequence may be used as proteolytic cleavage sites. In terms of biological role, secretolytin has antibacterial activity. In Bos taurus (Bovine), this protein is Secretogranin-1 (CHGB).